A 287-amino-acid chain; its full sequence is Protease HtpX (287 aa).

Transmembrane regions (helical) follow at residues 4-24 (IFLL…VMSI) and 33-53 (GGLL…SLAI). His-139 is a binding site for Zn(2+). Residue Glu-140 is part of the active site. His-143 provides a ligand contact to Zn(2+). Helical transmembrane passes span 154-174 (LIQG…ASII) and 195-215 (AVVF…VAYF). Glu-220 provides a ligand contact to Zn(2+).

It belongs to the peptidase M48B family. Zn(2+) is required as a cofactor.

It localises to the cell inner membrane. The protein is Protease HtpX of Shewanella loihica (strain ATCC BAA-1088 / PV-4).